Consider the following 301-residue polypeptide: Probable alpha-L-glutamate ligase (301 aa).

The ATP-grasp domain maps to 104–287 (LQLLSRRGIG…VAGMIIEHLE (184 aa)). ATP is bound by residues Lys141, 178 to 179 (EY), Asp187, and 211 to 213 (RSN). Mg(2+) contacts are provided by Asp248, Glu260, and Asn262. Positions 248, 260, and 262 each coordinate Mn(2+).

Belongs to the RimK family. Requires Mg(2+) as cofactor. Mn(2+) is required as a cofactor.

The sequence is that of Probable alpha-L-glutamate ligase from Pseudomonas putida (strain ATCC 700007 / DSM 6899 / JCM 31910 / BCRC 17059 / LMG 24140 / F1).